A 250-amino-acid polypeptide reads, in one-letter code: Urease accessory protein UreG 3 (250 aa).

Residues 1-24 form a disordered region; it reads MPDNASAQQPGQPAQGPNEHYHQP. The span at 7 to 17 shows a compositional bias: low complexity; it reads AQQPGQPAQGP. 37 to 44 provides a ligand contact to GTP; sequence GPVGTGKS. Residues 230–250 form a disordered region; sequence GTHVPTDPGPMAPHSHSHDGS.

Belongs to the SIMIBI class G3E GTPase family. UreG subfamily. Homodimer. UreD, UreF and UreG form a complex that acts as a GTP-hydrolysis-dependent molecular chaperone, activating the urease apoprotein by helping to assemble the nickel containing metallocenter of UreC. The UreE protein probably delivers the nickel.

It is found in the cytoplasm. Facilitates the functional incorporation of the urease nickel metallocenter. This process requires GTP hydrolysis, probably effectuated by UreG. This Streptomyces griseus subsp. griseus (strain JCM 4626 / CBS 651.72 / NBRC 13350 / KCC S-0626 / ISP 5235) protein is Urease accessory protein UreG 3.